Consider the following 254-residue polypeptide: Adenosine 5'-phosphosulfate reductase (254 aa).

[4Fe-4S] cluster-binding residues include Cys-131, Cys-132, Cys-212, and Cys-215. The Nucleophile; cysteine thiosulfonate intermediate role is filled by Cys-238.

It belongs to the PAPS reductase family. CysH subfamily. It depends on [4Fe-4S] cluster as a cofactor.

The protein resides in the cytoplasm. The catalysed reaction is [thioredoxin]-disulfide + sulfite + AMP + 2 H(+) = adenosine 5'-phosphosulfate + [thioredoxin]-dithiol. It functions in the pathway sulfur metabolism; hydrogen sulfide biosynthesis; sulfite from sulfate. Its function is as follows. Catalyzes the formation of sulfite from adenosine 5'-phosphosulfate (APS) using thioredoxin as an electron donor. This Mesorhizobium japonicum (strain LMG 29417 / CECT 9101 / MAFF 303099) (Mesorhizobium loti (strain MAFF 303099)) protein is Adenosine 5'-phosphosulfate reductase.